A 727-amino-acid chain; its full sequence is Glucans biosynthesis glucosyltransferase H (727 aa).

The tract at residues 17 to 41 is disordered; that stretch reads GSAMPNERPGPMEPQSLSQMPEGFP. Transmembrane regions (helical) follow at residues 58–80, 95–117, 407–429, 457–479, 499–521, and 572–594; these read FFVV…AVFS, FAIN…LLLL, GIMA…MLAL, ALRL…VLLL, VLFE…CGAV, and LLAW…AWTG.

This sequence belongs to the glycosyltransferase 2 family. OpgH subfamily.

The protein localises to the cell inner membrane. The protein operates within glycan metabolism; osmoregulated periplasmic glucan (OPG) biosynthesis. Involved in the biosynthesis of osmoregulated periplasmic glucans (OPGs). This is Glucans biosynthesis glucosyltransferase H from Shewanella oneidensis (strain ATCC 700550 / JCM 31522 / CIP 106686 / LMG 19005 / NCIMB 14063 / MR-1).